We begin with the raw amino-acid sequence, 198 residues long: Ribonuclease HII (198 aa).

The 188-residue stretch at 11–198 (NLIAGVDEVG…GPVKRVLGLV (188 aa)) folds into the RNase H type-2 domain. The a divalent metal cation site is built by Asp17, Glu18, and Asp109.

Belongs to the RNase HII family. The cofactor is Mn(2+). Mg(2+) serves as cofactor.

It localises to the cytoplasm. It carries out the reaction Endonucleolytic cleavage to 5'-phosphomonoester.. In terms of biological role, endonuclease that specifically degrades the RNA of RNA-DNA hybrids. This is Ribonuclease HII from Yersinia enterocolitica serotype O:8 / biotype 1B (strain NCTC 13174 / 8081).